Reading from the N-terminus, the 158-residue chain is uncharacterized protein (158 aa).

The 62-residue stretch at 12 to 73 folds into the HTH asnC-type domain; the sequence is LDEIDRAILR…LINPFKAGYE (62 aa). Positions 31-50 form a DNA-binding region, H-T-H motif; it reads YSEISRRINVPESTVRARVN.

This is an uncharacterized protein from Pyrococcus horikoshii (strain ATCC 700860 / DSM 12428 / JCM 9974 / NBRC 100139 / OT-3).